The chain runs to 306 residues: 26S proteasome regulatory subunit RPN11 (306 aa).

Residues 27-162 (VYISSIALLK…IDAFRLIDTG (136 aa)) form the MPN domain. His109, His111, and Asp122 together coordinate Zn(2+). A JAMM motif motif is present at residues 109–122 (HSHPGFGCWLSSVD).

The protein belongs to the peptidase M67A family.

Functionally, acts as a regulatory subunit of the 26 proteasome which is involved in the ATP-dependent degradation of ubiquitinated proteins. In Candida glabrata (strain ATCC 2001 / BCRC 20586 / JCM 3761 / NBRC 0622 / NRRL Y-65 / CBS 138) (Yeast), this protein is 26S proteasome regulatory subunit RPN11 (RPN11).